The sequence spans 732 residues: Polyadenylate-binding protein, cytoplasmic and nuclear (732 aa).

A compositionally biased stretch (polar residues) spans Met1–Pro19. Residues Met1 to Glu26 form a disordered region. 4 consecutive RRM domains span residues Ala42 to Arg120, Gly130 to Ser207, Thr223 to Lys300, and Val326 to Arg454. Disordered regions lie at residues Val357–Leu413 and Met706–Ala732. Residues Ser371–Pro412 are compositionally biased toward basic and acidic residues. The region spanning Val630–Lys707 is the PABC domain.

It belongs to the polyadenylate-binding protein type-1 family.

It is found in the cytoplasm. The protein resides in the nucleus. In terms of biological role, binds the poly(A) tail of mRNA. Appears to be an important mediator of the multiple roles of the poly(A) tail in mRNA biogenesis, stability and translation. In the nucleus, involved in both mRNA cleavage and polyadenylation. Is also required for efficient mRNA export to the cytoplasm. Acts in concert with a poly(A)-specific nuclease (PAN) to affect poly(A) tail shortening, which may occur concomitantly with either nucleocytoplasmic mRNA transport or translational initiation. In the cytoplasm, stimulates translation initiation and regulates mRNA decay through translation termination-coupled poly(A) shortening, probably mediated by PAN. The polypeptide is Polyadenylate-binding protein, cytoplasmic and nuclear (pab1) (Emericella nidulans (strain FGSC A4 / ATCC 38163 / CBS 112.46 / NRRL 194 / M139) (Aspergillus nidulans)).